The following is a 661-amino-acid chain: Peroxisomal acyl-coenzyme A oxidase 1 (661 aa).

2 positions are modified to N6-succinyllysine: Lys89 and Lys90. Position 139 (Thr139) interacts with FAD. N6-succinyllysine is present on Lys159. Gly178 provides a ligand contact to FAD. Residue Lys216 is modified to N6-acetyllysine. Position 241 is an N6-succinyllysine (Lys241). 3 positions are modified to N6-acetyllysine: Lys255, Lys267, and Lys272. At Lys349 the chain carries N6-succinyllysine. Residue Glu421 is the Proton acceptor of the active site. N6-acetyllysine; alternate is present on residues Lys437, Lys446, Lys512, and Lys637. N6-succinyllysine; alternate is present on residues Lys437, Lys446, Lys512, and Lys637. N6-succinyllysine is present on Lys643. At Ser649 the chain carries Phosphoserine. Position 652 is an N6-acetyllysine (Lys652). Lys655 carries the post-translational modification N6-succinyllysine. The Microbody targeting signal motif lies at 659–661 (SKL).

The protein belongs to the acyl-CoA oxidase family. Homodimer. Interacts with LONP2. FAD is required as a cofactor.

It is found in the peroxisome. It carries out the reaction a 2,3-saturated acyl-CoA + O2 = a (2E)-enoyl-CoA + H2O2. The catalysed reaction is hexadecanoyl-CoA + O2 = (2E)-hexadecenoyl-CoA + H2O2. It catalyses the reaction dodecanoyl-CoA + O2 = (2E)-dodecenoyl-CoA + H2O2. The enzyme catalyses octanoyl-CoA + O2 = (2E)-octenoyl-CoA + H2O2. It carries out the reaction decanoyl-CoA + O2 = (2E)-decenoyl-CoA + H2O2. The catalysed reaction is tetradecanoyl-CoA + O2 = (2E)-tetradecenoyl-CoA + H2O2. It catalyses the reaction hexadecanedioyl-CoA + O2 = (2E)-hexadecenedioyl-CoA + H2O2. The enzyme catalyses tetracosanoyl-CoA + O2 = (2E)-tetracosenoyl-CoA + H2O2. It carries out the reaction glutaryl-CoA + O2 = (2E)-glutaconyl-CoA + H2O2. The catalysed reaction is hexanoyl-CoA + O2 = (2E)-hexenoyl-CoA + H2O2. It catalyses the reaction octadecanoyl-CoA + O2 = (2E)-octadecenoyl-CoA + H2O2. The enzyme catalyses (5Z,8Z,11Z,14Z,17Z)-eicosapentaenoyl-CoA + O2 = (2E,5Z,8Z,11Z,14Z,17Z)-icosahexaenoyl-CoA + H2O2. It carries out the reaction (6Z,9Z,12Z,15Z,18Z,21Z)-tetracosahexaenoyl-CoA + O2 = (2E,6Z,9Z,12Z,15Z,18Z,21Z)-tetracosaheptaenoyl-CoA + H2O2. It participates in lipid metabolism; peroxisomal fatty acid beta-oxidation. Its function is as follows. Involved in the initial and rate-limiting step of peroxisomal beta-oxidation of straight-chain saturated and unsaturated very-long-chain fatty acids. Catalyzes the desaturation of fatty acyl-CoAs such as palmitoyl-CoA (hexadecanoyl-CoA) to 2-trans-enoyl-CoAs ((2E)-enoyl-CoAs) such as (2E)-hexadecenoyl-CoA, and donates electrons directly to molecular oxygen (O(2)), thereby producing hydrogen peroxide (H(2)O(2)). Isoform 2 shows higher activity with hexadecanoyl-CoA as substrate than isoform 1. The chain is Peroxisomal acyl-coenzyme A oxidase 1 (ACOX1) from Phascolarctos cinereus (Koala).